The chain runs to 196 residues: Imidazoleglycerol-phosphate dehydratase (196 aa).

This sequence belongs to the imidazoleglycerol-phosphate dehydratase family.

The protein resides in the cytoplasm. The catalysed reaction is D-erythro-1-(imidazol-4-yl)glycerol 3-phosphate = 3-(imidazol-4-yl)-2-oxopropyl phosphate + H2O. Its pathway is amino-acid biosynthesis; L-histidine biosynthesis; L-histidine from 5-phospho-alpha-D-ribose 1-diphosphate: step 6/9. The chain is Imidazoleglycerol-phosphate dehydratase from Lachnoclostridium phytofermentans (strain ATCC 700394 / DSM 18823 / ISDg) (Clostridium phytofermentans).